Reading from the N-terminus, the 337-residue chain is tRNA N6-adenosine threonylcarbamoyltransferase (337 aa).

His110 and His114 together coordinate Fe cation. Substrate-binding positions include 132 to 136 (VVSGG), Asp165, Gly178, Asp182, and Asn268. Position 293 (Asp293) interacts with Fe cation.

It belongs to the KAE1 / TsaD family. Requires Fe(2+) as cofactor.

It localises to the cytoplasm. It catalyses the reaction L-threonylcarbamoyladenylate + adenosine(37) in tRNA = N(6)-L-threonylcarbamoyladenosine(37) in tRNA + AMP + H(+). In terms of biological role, required for the formation of a threonylcarbamoyl group on adenosine at position 37 (t(6)A37) in tRNAs that read codons beginning with adenine. Is involved in the transfer of the threonylcarbamoyl moiety of threonylcarbamoyl-AMP (TC-AMP) to the N6 group of A37, together with TsaE and TsaB. TsaD likely plays a direct catalytic role in this reaction. In Sulfurihydrogenibium sp. (strain YO3AOP1), this protein is tRNA N6-adenosine threonylcarbamoyltransferase.